We begin with the raw amino-acid sequence, 770 residues long: Protein PAT1 homolog 1 (770 aa).

Residues 1–42 (MFRYESLEDCPLDEDEDAFQGLGEEDEEIDQFNDDTFGSGAV) form a disordered region. The interval 1 to 84 (MFRYESLEDC…EMDLLGDHEE (84 aa)) is region A; interaction with DDX6/RCK. Residues 1-397 (MFRYESLEDC…HQSSHQDHLR (397 aa)) are involved in nuclear foci localization. Over residues 7–33 (LEDCPLDEDEDAFQGLGEEDEEIDQFN) the composition is skewed to acidic residues. The interval 85–388 (NLAERLSKMV…LNGTGDRGGH (304 aa)) is region N; interaction with decapping machinery. A Nuclear export signal motif is present at residues 86–95 (LAERLSKMVI). The disordered stretch occupies residues 155-195 (PQRPLQGPEDDRDLSERALPRRSTSPIIGSPPVRAVPIGTP). Ser-177 bears the Phosphoserine mark. Thr-178 carries the post-translational modification Phosphothreonine. 2 positions are modified to phosphoserine: Ser-179 and Ser-184. The residue at position 194 (Thr-194) is a Phosphothreonine. Asymmetric dimethylarginine is present on residues Arg-217, Arg-223, and Arg-263. Positions 223-397 (RYPAPYGERI…HQSSHQDHLR (175 aa)) are involved in RNA-binding. Ser-278 is subject to Phosphoserine. At Arg-284 the chain carries Asymmetric dimethylarginine. Disordered stretches follow at residues 319-340 (FSAP…GPHL) and 376-396 (HRNL…QDHL). The span at 321–337 (APPPATPPPQQHPPGPG) shows a compositional bias: pro residues. Arg-385 bears the Omega-N-methylarginine mark. The span at 385–396 (RGGHQSSHQDHL) shows a compositional bias: basic and acidic residues. The tract at residues 389–448 (QSSHQDHLRKDPYANLMLQREKDWVSKIQMMQLQSTDPYLDDFYYQNYFEKLEKLSAAEE) is region H. The segment at 398-770 (KDPYANLMLQ…TKLQLVQGIR (373 aa)) is involved in nuclear speckle localization. The segment at 449 to 770 (IQGDGPKKER…TKLQLVQGIR (322 aa)) is region C.

This sequence belongs to the PAT1 family. In terms of assembly, interacts (via region A) with DDX6/RCK. Interacts (via region H and region C) with LSM1 and LSM4. Interacts (via region N) with DCP1A, DCP2, EDC3, EDC4 and XRN1. Interacts with the CCR4-NOT complex. Interacts with the Lsm-containing SMN-Sm protein complex. Interacts with EIF4ENIF1/4E-T.

Its subcellular location is the cytoplasm. The protein localises to the P-body. It localises to the nucleus. The protein resides in the PML body. It is found in the nucleus speckle. RNA-binding protein involved in deadenylation-dependent decapping of mRNAs, leading to the degradation of mRNAs. Acts as a scaffold protein that connects deadenylation and decapping machinery. Required for cytoplasmic mRNA processing body (P-body) assembly. This chain is Protein PAT1 homolog 1 (Patl1), found in Mus musculus (Mouse).